Here is a 953-residue protein sequence, read N- to C-terminus: Zinc finger CCCH domain-containing protein 18 (953 aa).

N-acetylmethionine is present on Met1. Residues 1–14 are compositionally biased toward basic and acidic residues; sequence MDVAESPERDPHSP. Disordered stretches follow at residues 1–222 and 391–928; these read MDVA…RPRP and QYTE…LSRR. Ser6 bears the Phosphoserine mark. The segment covering 15-26 has biased composition (acidic residues); it reads EDEEQPQGLSDD. Residues Ser34, Ser46, Ser53, Ser59, Ser67, Ser74, Ser78, Ser83, and Ser95 each carry the phosphoserine modification. Residues 60-72 show a composition bias toward acidic residues; that stretch reads QEEEDNHSDEEDR. The span at 97–106 shows a compositional bias: acidic residues; it reads CEEEGDEGEE. Residues 105–134 are a coiled coil; sequence EEDRTSDLRDEASSVTRELDEHELDYDEEV. The segment covering 107 to 124 has biased composition (basic and acidic residues); the sequence is DRTSDLRDEASSVTRELD. Position 109 is a phosphothreonine (Thr109). A phosphoserine mark is found at Ser110 and Ser118. Composition is skewed to acidic residues over residues 125–136 and 143–158; these read EHELDYDEEVPE and QEDEAEKAGAEDDEEK. Basic and acidic residues predominate over residues 159-168; it reads GEGTPREEGK. Residue Thr162 is modified to Phosphothreonine. Residues Ser173 and Ser179 each carry the phosphoserine modification. A compositionally biased stretch (basic and acidic residues) spans 175–190; the sequence is GEKESLEAAKEKKKED. Positions 191–207 are enriched in acidic residues; the sequence is DDGEIDDGEIDDDDLEE. Basic and acidic residues predominate over residues 208 to 217; that stretch reads GEVKDPSDRK. The segment at 219-245 adopts a C3H1-type zinc-finger fold; it reads RPRPTCRFFMKGNCTWGMNCRFIHPGV. Over residues 396–482 the composition is skewed to basic and acidic residues; the sequence is EPYHNYRERE…EKEREKEKGK (87 aa). Positions 399 to 464 form a coiled coil; sequence HNYRERERER…RERAKRDEKD (66 aa). Residue Ser487 is modified to Phosphoserine. Lys510 participates in a covalent cross-link: Glycyl lysine isopeptide (Lys-Gly) (interchain with G-Cter in SUMO2). Residues 510 to 520 are compositionally biased toward basic and acidic residues; the sequence is KRADEWKDPWR. Phosphoserine occurs at positions 532, 534, and 536. Positions 545–606 are enriched in low complexity; the sequence is SASSASASNS…SRSRSFSSSP (62 aa). Residues Lys622 and Lys661 each participate in a glycyl lysine isopeptide (Lys-Gly) (interchain with G-Cter in SUMO2) cross-link. Over residues 661–670 the composition is skewed to basic and acidic residues; the sequence is KPGDPREARR. 2 stretches are compositionally biased toward low complexity: residues 692-725 and 736-750; these read GSSYSGSSSRSRSLSVSSVSSVSSATSSSSSAHS and ASPVSSASSRSPAPA. The span at 760–774 shows a compositional bias: basic and acidic residues; it reads KKEDGVKEEKRKRDS. Residue Lys766 forms a Glycyl lysine isopeptide (Lys-Gly) (interchain with G-Cter in SUMO2) linkage. Over residues 778–798 the composition is skewed to low complexity; it reads PPKSAKPPAGGKSSQQPSTPQ. At Lys814 the chain carries N6-acetyllysine. A Glycyl lysine isopeptide (Lys-Gly) (interchain with G-Cter in SUMO2) cross-link involves residue Lys817. Over residues 824–841 the composition is skewed to basic and acidic residues; sequence AADKGSRKRYEPSDKDRQ. Phosphoserine is present on residues Ser842, Ser852, Ser868, Ser893, and Ser896. The span at 893–906 shows a compositional bias: low complexity; that stretch reads SPQSKSSSKVTSVP. Residue Lys908 forms a Glycyl lysine isopeptide (Lys-Gly) (interchain with G-Cter in SUMO2) linkage. Residues 916-925 show a composition bias toward polar residues; it reads STKSGKASTL. Residues 921–950 are a coiled coil; that stretch reads KASTLSRREELLKQLKAVEDAIARKRAKIP.

As to quaternary structure, interacts with ZFC3H1 in a RNase-insensitive manner.

The protein resides in the nucleus. This chain is Zinc finger CCCH domain-containing protein 18, found in Homo sapiens (Human).